The chain runs to 58 residues: Small ribosomal subunit protein bS21 (58 aa).

Belongs to the bacterial ribosomal protein bS21 family.

The polypeptide is Small ribosomal subunit protein bS21 (Staphylococcus saprophyticus subsp. saprophyticus (strain ATCC 15305 / DSM 20229 / NCIMB 8711 / NCTC 7292 / S-41)).